The following is an 805-amino-acid chain: Polyribonucleotide nucleotidyltransferase (805 aa).

The Mg(2+) site is built by Asp491 and Asp497. The 60-residue stretch at 558 to 617 (PRMESMIIDKNKIKNVIGTGGKNVREICEKTGVKIEISQDGTVMIYAVSRDAVEEAKNMI) folds into the KH domain. Residues 627-694 (GKVFSGVISE…DKDHVQLSMR (68 aa)) form the S1 motif domain. The disordered stretch occupies residues 702-805 (DLLEHESYSS…GGGNKKPRFF (104 aa)). The span at 709–721 (YSSSKKNGPQSGD) shows a compositional bias: polar residues.

Belongs to the polyribonucleotide nucleotidyltransferase family. The cofactor is Mg(2+).

Its subcellular location is the cytoplasm. It catalyses the reaction RNA(n+1) + phosphate = RNA(n) + a ribonucleoside 5'-diphosphate. Involved in mRNA degradation. Catalyzes the phosphorolysis of single-stranded polyribonucleotides processively in the 3'- to 5'-direction. The sequence is that of Polyribonucleotide nucleotidyltransferase from Anaplasma marginale (strain St. Maries).